Consider the following 399-residue polypeptide: Probable aspartate/prephenate aminotransferase (399 aa).

3 residues coordinate L-aspartate: Gly-39, Trp-125, and Asn-175. Position 239 is an N6-(pyridoxal phosphate)lysine (Lys-239). L-aspartate is bound at residue Arg-375.

The protein belongs to the class-I pyridoxal-phosphate-dependent aminotransferase family. As to quaternary structure, homodimer. Requires pyridoxal 5'-phosphate as cofactor.

The protein resides in the cytoplasm. It catalyses the reaction L-aspartate + 2-oxoglutarate = oxaloacetate + L-glutamate. The enzyme catalyses L-arogenate + 2-oxoglutarate = prephenate + L-glutamate. In terms of biological role, catalyzes the reversible conversion of aspartate and 2-oxoglutarate to glutamate and oxaloacetate. Can also transaminate prephenate in the presence of glutamate. The polypeptide is Probable aspartate/prephenate aminotransferase (aatA) (Rickettsia typhi (strain ATCC VR-144 / Wilmington)).